The chain runs to 100 residues: Urease subunit gamma (100 aa).

This sequence belongs to the urease gamma subunit family. As to quaternary structure, heterotrimer of UreA (gamma), UreB (beta) and UreC (alpha) subunits. Three heterotrimers associate to form the active enzyme.

It localises to the cytoplasm. It catalyses the reaction urea + 2 H2O + H(+) = hydrogencarbonate + 2 NH4(+). Its pathway is nitrogen metabolism; urea degradation; CO(2) and NH(3) from urea (urease route): step 1/1. The polypeptide is Urease subunit gamma (Actinobacillus pleuropneumoniae (Haemophilus pleuropneumoniae)).